The following is a 502-amino-acid chain: Maturase K (502 aa).

Belongs to the intron maturase 2 family. MatK subfamily.

The protein localises to the plastid. Its subcellular location is the chloroplast. Functionally, usually encoded in the trnK tRNA gene intron. Probably assists in splicing its own and other chloroplast group II introns. This chain is Maturase K, found in Brassica oleracea (Wild cabbage).